A 148-amino-acid chain; its full sequence is Small ribosomal subunit protein uS15 (148 aa).

The protein belongs to the universal ribosomal protein uS15 family.

In Encephalitozoon cuniculi (strain GB-M1) (Microsporidian parasite), this protein is Small ribosomal subunit protein uS15 (RPS13).